The primary structure comprises 1159 residues: MPPVSKNTRTSSKTVKKPYDPPQGSSRPFFTVLKRAFSSVLHPFTSGLDEKASGTASKDRKSGRAGTKSLLTPELTPHYLGKSPRIIRVSNRSHVRTIDGIEEKVHTNTFEPRKPKQKQDYTNSPTLFKRHDELSLKSLNSLHPSSALSKKLGSTSQHQIATPKSSASLLNILRSLHDEQKNTLNISSVKQDRITEANPTCEKRKPSRSPSPMLSKKKSVARASENEPSAKQNKSFSGNDSHKSLTDIRDKENGETEVSAKNHVPHRSSRRRRRHQRLIPIIYETLEQMDLRKPVLVNAEVQTDSNPGNTMFIDKQDIYHRLSTPTSRKRQTLEKGHIKAFSAVDEDLDEIFACEDDVHYTALPKQNPKSERILEPIIASPKDNTSDKGLLTKSAPTFEELQASITPKPVKTSPNDTALTLANAEDNKTFEHQPLSKDTEAPKSQFSSSPTKESTTRKSEVEPPSPSKEIKSSHFSVPEFKFEPKTEATTDKKLNVPKFEFKPTATADVQTNRLKENEPKPTFFAQLPSKTQETPSITENKPSFFSQLSPKREETEKKDNAPSAPASTSGFSFGGFAPKTLEEKEETKAPTFNFSLNNASSTQDTTKPTLQFNFGSSFGKPTSNIFNDKKTSENGLASSTVASESKPSAPESKPSSGFGNTAGSSPFSFNLTKESKEVPPTNSFSFAKKGKDEANDSLSAKASTPFSFAKPNTENVTTTAPQFSFNFTKPNTDAKTNLLPEKTFNEEAVKQKETEKEVPPTGPKASEIKDSVSSNNAVPSSTFNFVSPFAAVSEKTNENNIPNDTTKTNGNATKRTLEQTEDAKPFAFSFGSTTEQANKKASTSNETTKPQLDTSSKTDGVTANAPFSFASAFNAPKPSTNTADGKDSASNLTTPSPAFSFGNNSGVKASSNNNPSTNSSTAPFSFGTSNKPAFSFGSATSKTTSEGTAPAASASAPAPTTSAFSFGASNSSMNKEENTPMAKDAGDTAPASGFKSGFSFGANNSPQPASMFGTSTPAPSSAFAFGNQSGTNPAAPAGFGGITNTATNNPPSTGFTFTPSNAGSTAAPMFGAGNTPNPSGSINNASQAFAFGSGEPSNPASNPPSTGFSFGAATPSAFNASASQSPAPNGIQFNLGSSNSQTNAPPGRKIAVPRSRRKR.

Positions 1–13 (MPPVSKNTRTSSK) are enriched in polar residues. Disordered regions lie at residues 1–28 (MPPVSKNTRTSSKTVKKPYDPPQGSSRP), 44–77 (FTSGLDEKASGTASKDRKSGRAGTKSLLTPELTP), 106–125 (HTNTFEPRKPKQKQDYTNSP), and 183–273 (TLNI…RRRR). Composition is skewed to basic and acidic residues over residues 48–62 (LDEKASGTASKDRKS) and 106–119 (HTNTFEPRKPKQKQ). S211 carries the phosphoserine modification. The span at 226–239 (NEPSAKQNKSFSGN) shows a compositional bias: polar residues. The segment covering 240-260 (DSHKSLTDIRDKENGETEVSA) has biased composition (basic and acidic residues). Over residues 263–273 (HVPHRSSRRRR) the composition is skewed to basic residues. A Phosphoserine modification is found at S380. A compositionally biased stretch (basic and acidic residues) spans 426 to 441 (DNKTFEHQPLSKDTEA). 3 disordered regions span residues 426-715 (DNKT…NTEN), 746-780 (EEAVKQKETEKEVPPTGPKASEIKDSVSSNNAVPS), and 794-1159 (EKTN…RRKR). Positions 442-453 (PKSQFSSSPTKE) are enriched in polar residues. A Phosphoserine modification is found at S465. Positions 480-494 (FKFEPKTEATTDKKL) are enriched in basic and acidic residues. Polar residues predominate over residues 528 to 549 (PSKTQETPSITENKPSFFSQLS). Residue S546 is modified to Phosphoserine. Residues 550-560 (PKREETEKKDN) are compositionally biased toward basic and acidic residues. Positions 590–626 (PTFNFSLNNASSTQDTTKPTLQFNFGSSFGKPTSNIF) are enriched in polar residues. Over residues 642–656 (ASESKPSAPESKPSS) the composition is skewed to low complexity. Composition is skewed to polar residues over residues 657–672 (GFGNTAGSSPFSFNLT) and 696–715 (DSLSAKASTPFSFAKPNTEN). Over residues 746–758 (EEAVKQKETEKEV) the composition is skewed to basic and acidic residues. 2 stretches are compositionally biased toward polar residues: residues 771–780 (SVSSNNAVPS) and 798–814 (ENNIPNDTTKTNGNATK). Residues 815–824 (RTLEQTEDAK) are compositionally biased toward basic and acidic residues. A compositionally biased stretch (polar residues) spans 830-861 (FGSTTEQANKKASTSNETTKPQLDTSSKTDGV). Low complexity predominate over residues 863-879 (ANAPFSFASAFNAPKPS). Over residues 880-908 (TNTADGKDSASNLTTPSPAFSFGNNSGVK) the composition is skewed to polar residues. Low complexity predominate over residues 909 to 926 (ASSNNNPSTNSSTAPFSF). Polar residues predominate over residues 927 to 947 (GTSNKPAFSFGSATSKTTSEG). The span at 948-963 (TAPAASASAPAPTTSA) shows a compositional bias: low complexity. Composition is skewed to polar residues over residues 1001 to 1019 (GANNSPQPASMFGTSTPAP), 1042 to 1064 (ITNTATNNPPSTGFTFTPSNAGS), 1074 to 1087 (NTPNPSGSINNASQ), 1095 to 1108 (EPSNPASNPPSTGF), and 1116 to 1144 (SAFNASASQSPAPNGIQFNLGSSNSQTNA).

It to yeast nucleoporins NUP1 and NUP2.

It localises to the nucleus. Its subcellular location is the nuclear pore complex. In terms of biological role, nucleoporins may be involved in both binding and translocation of the proteins during nucleocytoplasmic transport. In S.pombe it is required for the nuclear localization of retrotransposon tf1. The protein is Nucleoporin nup124 (nup124) of Schizosaccharomyces pombe (strain 972 / ATCC 24843) (Fission yeast).